The following is a 149-amino-acid chain: Protein SprT-like (149 aa).

The region spanning 5–143 is the SprT-like domain; sequence DYVKQVSLED…CGLCRGKLLL (139 aa). Position 64 (histidine 64) interacts with Zn(2+). Residue glutamate 65 is part of the active site. Histidine 68 contributes to the Zn(2+) binding site.

It belongs to the SprT family. Requires Zn(2+) as cofactor.

It localises to the cytoplasm. The protein is Protein SprT-like of Streptococcus pneumoniae (strain Hungary19A-6).